The chain runs to 261 residues: Cytochrome c oxidase subunit 3 (261 aa).

Over 1–15 (MTHQTHAYHMVNPSP) the chain is Mitochondrial matrix. Residues 16 to 34 (WPLTGALSALLMTSGLAMW) traverse the membrane as a helical segment. The Mitochondrial intermembrane segment spans residues 35–40 (FHFNSV). The helical transmembrane segment at 41-66 (TLLTLGLTTNMLTMYQWWRDIIREST) threads the bilayer. The Mitochondrial matrix portion of the chain corresponds to 67 to 72 (FQGHHT). A helical membrane pass occupies residues 73–105 (PTVQKGLRYGMILFIISEVLFFTGFFWAFYHSS). Over 106–128 (LAPTPELGGCWPPTGISPLNPLE) the chain is Mitochondrial intermembrane. A helical membrane pass occupies residues 129–152 (VPLLNTSVLLASGVSITWAHHSLM). At 153 to 155 (EGN) the chain is on the mitochondrial matrix side. The helical transmembrane segment at 156–183 (RNHMLQALFITIALGVYFTLLQASEYYE) threads the bilayer. Residues 184–190 (APFTISD) lie on the Mitochondrial intermembrane side of the membrane. The chain crosses the membrane as a helical span at residues 191 to 223 (GIYGSTFFVATGFHGLHVIIGSTFLIVCFFRQL). The Mitochondrial matrix segment spans residues 224–232 (KFHFTSNHH). A helical transmembrane segment spans residues 233–256 (FGFEAAAWYWHFVDVVWLFLYVSI). The Mitochondrial intermembrane segment spans residues 257–261 (YWWGS).

The protein belongs to the cytochrome c oxidase subunit 3 family. As to quaternary structure, component of the cytochrome c oxidase (complex IV, CIV), a multisubunit enzyme composed of 14 subunits. The complex is composed of a catalytic core of 3 subunits MT-CO1, MT-CO2 and MT-CO3, encoded in the mitochondrial DNA, and 11 supernumerary subunits COX4I, COX5A, COX5B, COX6A, COX6B, COX6C, COX7A, COX7B, COX7C, COX8 and NDUFA4, which are encoded in the nuclear genome. The complex exists as a monomer or a dimer and forms supercomplexes (SCs) in the inner mitochondrial membrane with NADH-ubiquinone oxidoreductase (complex I, CI) and ubiquinol-cytochrome c oxidoreductase (cytochrome b-c1 complex, complex III, CIII), resulting in different assemblies (supercomplex SCI(1)III(2)IV(1) and megacomplex MCI(2)III(2)IV(2)).

The protein localises to the mitochondrion inner membrane. The catalysed reaction is 4 Fe(II)-[cytochrome c] + O2 + 8 H(+)(in) = 4 Fe(III)-[cytochrome c] + 2 H2O + 4 H(+)(out). Component of the cytochrome c oxidase, the last enzyme in the mitochondrial electron transport chain which drives oxidative phosphorylation. The respiratory chain contains 3 multisubunit complexes succinate dehydrogenase (complex II, CII), ubiquinol-cytochrome c oxidoreductase (cytochrome b-c1 complex, complex III, CIII) and cytochrome c oxidase (complex IV, CIV), that cooperate to transfer electrons derived from NADH and succinate to molecular oxygen, creating an electrochemical gradient over the inner membrane that drives transmembrane transport and the ATP synthase. Cytochrome c oxidase is the component of the respiratory chain that catalyzes the reduction of oxygen to water. Electrons originating from reduced cytochrome c in the intermembrane space (IMS) are transferred via the dinuclear copper A center (CU(A)) of subunit 2 and heme A of subunit 1 to the active site in subunit 1, a binuclear center (BNC) formed by heme A3 and copper B (CU(B)). The BNC reduces molecular oxygen to 2 water molecules using 4 electrons from cytochrome c in the IMS and 4 protons from the mitochondrial matrix. The chain is Cytochrome c oxidase subunit 3 (MT-CO3) from Neotragus moschatus (Suni).